A 502-amino-acid chain; its full sequence is Beta-glucosidase 7 (502 aa).

Positions 1–22 (MKPFSQFFVFVVTVSATSYIDA) are cleaved as a signal peptide. A beta-D-glucoside is bound by residues Gln42, His140, and 185 to 186 (NE). The active-site Proton donor is the Glu186. N-linked (GlcNAc...) asparagine glycosylation is present at Asn208. An a beta-D-glucoside-binding site is contributed by Tyr325. Asn359 is a glycosylation site (N-linked (GlcNAc...) asparagine). Glu392 is an a beta-D-glucoside binding site. The Nucleophile role is filled by Glu392. Residue Asn425 is glycosylated (N-linked (GlcNAc...) asparagine). 2 residues coordinate a beta-D-glucoside: Trp435 and Tyr451. N-linked (GlcNAc...) asparagine glycosylation is found at Asn457 and Asn479.

This sequence belongs to the glycosyl hydrolase 1 family.

It carries out the reaction Hydrolysis of terminal, non-reducing beta-D-glucosyl residues with release of beta-D-glucose.. The sequence is that of Beta-glucosidase 7 from Arabidopsis thaliana (Mouse-ear cress).